The primary structure comprises 82 residues: ATP synthase subunit c (82 aa).

2 consecutive transmembrane segments (helical) span residues 18-38 (LGEALGAGLAVIGAGLGIGKI) and 61-81 (IIAAALVEGVSLFAVVVCGFL).

This sequence belongs to the ATPase C chain family. F-type ATPases have 2 components, F(1) - the catalytic core - and F(0) - the membrane proton channel. F(1) has five subunits: alpha(3), beta(3), gamma(1), delta(1), epsilon(1). F(0) has three main subunits: a(1), b(2) and c(10-14). The alpha and beta chains form an alternating ring which encloses part of the gamma chain. F(1) is attached to F(0) by a central stalk formed by the gamma and epsilon chains, while a peripheral stalk is formed by the delta and b chains.

The protein resides in the cell inner membrane. F(1)F(0) ATP synthase produces ATP from ADP in the presence of a proton or sodium gradient. F-type ATPases consist of two structural domains, F(1) containing the extramembraneous catalytic core and F(0) containing the membrane proton channel, linked together by a central stalk and a peripheral stalk. During catalysis, ATP synthesis in the catalytic domain of F(1) is coupled via a rotary mechanism of the central stalk subunits to proton translocation. Functionally, key component of the F(0) channel; it plays a direct role in translocation across the membrane. A homomeric c-ring of between 10-14 subunits forms the central stalk rotor element with the F(1) delta and epsilon subunits. The sequence is that of ATP synthase subunit c from Azobacteroides pseudotrichonymphae genomovar. CFP2.